Here is a 382-residue protein sequence, read N- to C-terminus: Mannitol-1-phosphate 5-dehydrogenase (382 aa).

3-14 (ALHFGAGNIGRG) is a binding site for NAD(+). An N6-acetyllysine modification is found at K269.

Belongs to the mannitol dehydrogenase family.

It carries out the reaction D-mannitol 1-phosphate + NAD(+) = beta-D-fructose 6-phosphate + NADH + H(+). The protein is Mannitol-1-phosphate 5-dehydrogenase of Escherichia coli O17:K52:H18 (strain UMN026 / ExPEC).